Consider the following 195-residue polypeptide: dITP/XTP pyrophosphatase (195 aa).

8-13 (SNNQGK) provides a ligand contact to substrate. Residues Glu-39 and Asp-68 each contribute to the Mg(2+) site. The active-site Proton acceptor is the Asp-68. Residues Ser-69, 149–152 (FGYD), Lys-172, and 177–178 (HR) contribute to the substrate site.

The protein belongs to the HAM1 NTPase family. As to quaternary structure, homodimer. Mg(2+) serves as cofactor.

The enzyme catalyses XTP + H2O = XMP + diphosphate + H(+). It carries out the reaction dITP + H2O = dIMP + diphosphate + H(+). It catalyses the reaction ITP + H2O = IMP + diphosphate + H(+). In terms of biological role, pyrophosphatase that catalyzes the hydrolysis of nucleoside triphosphates to their monophosphate derivatives, with a high preference for the non-canonical purine nucleotides XTP (xanthosine triphosphate), dITP (deoxyinosine triphosphate) and ITP. Seems to function as a house-cleaning enzyme that removes non-canonical purine nucleotides from the nucleotide pool, thus preventing their incorporation into DNA/RNA and avoiding chromosomal lesions. This is dITP/XTP pyrophosphatase from Staphylococcus aureus (strain MRSA252).